The following is a 314-amino-acid chain: 2,3-dihydroxyphenylpropionate/2,3-dihydroxicinnamic acid 1,2-dioxygenase 2 (314 aa).

His-115 serves as the catalytic Proton donor. Catalysis depends on His-179, which acts as the Proton acceptor.

It belongs to the LigB/MhpB extradiol dioxygenase family. As to quaternary structure, homotetramer. Requires Fe(2+) as cofactor.

It carries out the reaction 3-(2,3-dihydroxyphenyl)propanoate + O2 = (2Z,4E)-2-hydroxy-6-oxonona-2,4-dienedioate + H(+). The enzyme catalyses (2E)-3-(2,3-dihydroxyphenyl)prop-2-enoate + O2 = (2Z,4E,7E)-2-hydroxy-6-oxonona-2,4,7-trienedioate + H(+). It participates in aromatic compound metabolism; 3-phenylpropanoate degradation. Functionally, catalyzes the non-heme iron(II)-dependent oxidative cleavage of 2,3-dihydroxyphenylpropionic acid and 2,3-dihydroxicinnamic acid into 2-hydroxy-6-ketononadienedioate and 2-hydroxy-6-ketononatrienedioate, respectively. The sequence is that of 2,3-dihydroxyphenylpropionate/2,3-dihydroxicinnamic acid 1,2-dioxygenase 2 (mhpB2) from Pseudomonas putida (Arthrobacter siderocapsulatus).